A 113-amino-acid polypeptide reads, in one-letter code: Beta-microseminoprotein A1 (113 aa).

A signal peptide spans M1–G20. Disulfide bonds link C22–C70, C38–C62, C57–C93, C60–C69, and C84–C107.

This sequence belongs to the beta-microseminoprotein family.

Its subcellular location is the secreted. The protein is Beta-microseminoprotein A1 (MSPA) of Saguinus oedipus (Cotton-top tamarin).